We begin with the raw amino-acid sequence, 484 residues long: Gasdermin-D (484 aa).

At Tyr37 the chain carries Phosphotyrosine. The residue at position 56 (Cys56) is an S-(2-succinyl)cysteine. 2 beta stranded membrane-spanning segments follow: residues 91–97 and 103–108; these read QGSVELA and KIAGGA. Tyr158 bears the Phosphotyrosine mark. The next 2 beta stranded transmembrane spans lie at 180–186 and 191–197; these read GSGRFSL and CLQGEGQ. Ser185 is modified (phosphoserine). An S-(2-succinyl)cysteine mark is found at Cys191 and Cys268. Residue Cys191 is the site of S-palmitoyl cysteine attachment. The interval 277-296 is linker helix loop; sequence VPAEGAFTEDFQGLRAEVET. Cys309 is subject to S-(2-succinyl)cysteine. Ser338 carries an O-linked (GlcNAc) serine glycan. An S-(2-succinyl)cysteine modification is found at Cys467.

Belongs to the gasdermin family. As to quaternary structure, homooligomer; homooligomeric ring-shaped pore complex containing 27-28 subunits when inserted in the membrane. Homooligomerization is promoted by the mTORC1 complex in macrophages. In response to a canonical inflammasome stimulus, such as nigericin, recruited to NLRP3 inflammasone with similar kinetics to that of uncleaved CASP1 precursor. Although this recruitment is also observed in the absence of PYCARD, it is more efficient in its presence. Post-translationally, cleavage at Asp-275 by CASP1 (mature and uncleaved precursor forms), CASP4, CASP5 or CASP8 relieves autoinhibition and is sufficient to initiate pyroptosis. Cleavage by CASP1 and CASP4 is not strictly dependent on the consensus cleavage site on GSDMD but depends on an exosite interface on CASP1 that recognizes and binds the Gasdermin-D, C-terminal (GSDMD-CT) part. Cleavage by CASP8 takes place following inactivation of MAP3K7/TAK1 by Yersinia toxin YopJ. Cleavage at Asp-87 by CASP3 or CASP7 inactivates the ability to mediate pyroptosis, but generates the Gasdermin-D, p13 chain, which translocates to the nucleus and acts as a transcription regulator. Cleavage by papain allergen generates the Gasdermin-D, p40 chain. In terms of processing, palmitoylated at Cys-191 by ZDHHC5 and ZDHHC9 in response to microbial infection and danger signals. Palmitoylation takes place before cleavage by caspases (CASP1, CASP4, CASP5 or CASP8) and is required for membrane translocation and pore formation. Depalmitoylated by LYPLA2. Succination of Cys-191 by the Krebs cycle intermediate fumarate, which leads to S-(2-succinyl)cysteine residues, inhibits processing by caspases, and ability to initiate pyroptosis. Succination modification is catalyzed by a non-enzymatic reaction caused by an accumulation of fumarate. Post-translationally, glycosylated: O-GlcNAcylation by OGT leads to reduced cleavage by CASP4 and decreased LPS-induced endothelial cell pyroptosis. In terms of processing, (Microbial infection) Cleaved and inactivated by Protease 3C from Human enterovirus 71 (EV71), preventing GSDMD-mediated pyroptosis. (Microbial infection) Cleaved and inactivated by the 3C-like proteinase nsp5 from human coronavirus SARS-CoV-2, preventing GSDMD-mediated pyroptosis. Post-translationally, (Microbial infection) Ubiquitinated by S.flexneri IpaH7.8, leading to its degradation by the proteasome. In terms of tissue distribution, expressed in the suprabasal cells of esophagus, as well as in the isthmus/neck, pit, and gland of the stomach, suggesting preferential expression in differentiating cells.

Its subcellular location is the cytoplasm. It localises to the cytosol. The protein localises to the inflammasome. The protein resides in the cell membrane. It is found in the secreted. Its subcellular location is the mitochondrion membrane. It localises to the nucleus. The full-length protein before cleavage is inactive: intramolecular interactions between N- and C-terminal domains mediate autoinhibition in the absence of activation signal. The intrinsic pyroptosis-inducing activity is carried by the released N-terminal moiety (Gasdermin-D, N-terminal) following cleavage by caspases CASP1, CASP4, CASP5 or CASP8. Cleavage at Asp-87 by CASP3 or CASP7 inactivates the ability to mediate pyroptosis. Homooligomerization and pore formation is specifically inhibited by VHH(GSDMD-1) and, to a lesser extent, VHH(GSDMD-2) nanobodies, protecting against excessive pyroptosis. Inhibited by small molecule NU6300, which covalently reacts with Cys-191, thereby preventing palmitoylation and pyroptosis. Precursor of a pore-forming protein that plays a key role in host defense against pathogen infection and danger signals. This form constitutes the precursor of the pore-forming protein: upon cleavage, the released N-terminal moiety (Gasdermin-D, N-terminal) binds to membranes and forms pores, triggering pyroptosis. In terms of biological role, promotes pyroptosis in response to microbial infection and danger signals. Produced by the cleavage of gasdermin-D by inflammatory caspases CASP1, CASP4 or CASP5 in response to canonical, as well as non-canonical (such as cytosolic LPS) inflammasome activators. After cleavage, moves to the plasma membrane where it strongly binds to inner leaflet lipids, including monophosphorylated phosphatidylinositols, such as phosphatidylinositol 4-phosphate, bisphosphorylated phosphatidylinositols, such as phosphatidylinositol (4,5)-bisphosphate, as well as phosphatidylinositol (3,4,5)-bisphosphate, and more weakly to phosphatidic acid and phosphatidylserine. Homooligomerizes within the membrane and forms pores of 10-15 nanometers (nm) of inner diameter, allowing the release of mature interleukin-1 (IL1B and IL18) and triggering pyroptosis. Gasdermin pores also allow the release of mature caspase-7 (CASP7). In some, but not all, cells types, pyroptosis is followed by pyroptotic cell death, which is caused by downstream activation of ninjurin-1 (NINJ1), which mediates membrane rupture (cytolysis). Also forms pores in the mitochondrial membrane, resulting in release of mitochondrial DNA (mtDNA) into the cytosol. Gasdermin-D, N-terminal released from pyroptotic cells into the extracellular milieu rapidly binds to and kills both Gram-negative and Gram-positive bacteria, without harming neighboring mammalian cells, as it does not disrupt the plasma membrane from the outside due to lipid-binding specificity. Under cell culture conditions, also active against intracellular bacteria, such as Listeria monocytogenes. Also active in response to MAP3K7/TAK1 inactivation by Yersinia toxin YopJ, which triggers cleavage by CASP8 and subsequent activation. Required for mucosal tissue defense against enteric pathogens. Activation of the non-canonical inflammasome in brain endothelial cells can lead to excessive pyroptosis, leading to blood-brain barrier breakdown. Strongly binds to bacterial and mitochondrial lipids, including cardiolipin. Does not bind to unphosphorylated phosphatidylinositol, phosphatidylethanolamine nor phosphatidylcholine. Its function is as follows. Transcription coactivator produced by the cleavage by CASP3 or CASP7 in the upper small intestine in response to dietary antigens. Required to maintain food tolerance in small intestine: translocates to the nucleus and acts as a coactivator for STAT1 to induce the transcription of CIITA and MHC class II molecules, which in turn induce type 1 regulatory T (Tr1) cells in upper small intestine. Functionally, produced by the cleavage by papain allergen. After cleavage, moves to the plasma membrane and homooligomerizes within the membrane and forms pores of 10-15 nanometers (nm) of inner diameter, allowing the specific release of mature interleukin-33 (IL33), promoting type 2 inflammatory immune response. The sequence is that of Gasdermin-D from Homo sapiens (Human).